The chain runs to 240 residues: Uridylate kinase (240 aa).

Residue 12–15 (KLSG) coordinates ATP. The tract at residues 20-25 (GDQGYG) is involved in allosteric activation by GTP. Residue Gly54 coordinates UMP. ATP contacts are provided by Gly55 and Arg59. UMP contacts are provided by residues Asp74 and 135 to 142 (TGNPYFST). Asn163, Tyr169, and Asp172 together coordinate ATP.

It belongs to the UMP kinase family. Homohexamer.

It localises to the cytoplasm. It carries out the reaction UMP + ATP = UDP + ADP. Its pathway is pyrimidine metabolism; CTP biosynthesis via de novo pathway; UDP from UMP (UMPK route): step 1/1. Allosterically activated by GTP. Inhibited by UTP. Functionally, catalyzes the reversible phosphorylation of UMP to UDP. The chain is Uridylate kinase from Oceanobacillus iheyensis (strain DSM 14371 / CIP 107618 / JCM 11309 / KCTC 3954 / HTE831).